The primary structure comprises 88 residues: Adenylosuccinate lyase (88 aa).

N(6)-(1,2-dicarboxyethyl)-AMP contacts are provided by residues 4 to 5 (RY) and 67 to 69 (KHD).

The protein belongs to the lyase 1 family. Adenylosuccinate lyase subfamily. As to quaternary structure, homotetramer and homodimer. Residues from neighboring subunits contribute catalytic and substrate-binding residues to each active site.

It carries out the reaction N(6)-(1,2-dicarboxyethyl)-AMP = fumarate + AMP. The catalysed reaction is (2S)-2-[5-amino-1-(5-phospho-beta-D-ribosyl)imidazole-4-carboxamido]succinate = 5-amino-1-(5-phospho-beta-D-ribosyl)imidazole-4-carboxamide + fumarate. Its pathway is purine metabolism; AMP biosynthesis via de novo pathway; AMP from IMP: step 2/2. It functions in the pathway purine metabolism; IMP biosynthesis via de novo pathway; 5-amino-1-(5-phospho-D-ribosyl)imidazole-4-carboxamide from 5-amino-1-(5-phospho-D-ribosyl)imidazole-4-carboxylate: step 2/2. Its function is as follows. Catalyzes two reactions in de novo purine nucleotide biosynthesis. Catalyzes the breakdown of 5-aminoimidazole- (N-succinylocarboxamide) ribotide (SAICAR or 2-[5-amino-1-(5-phospho-beta-D-ribosyl)imidazole-4-carboxamido]succinate) to 5-aminoimidazole-4-carboxamide ribotide (AICAR or 5-amino-1-(5-phospho-beta-D-ribosyl)imidazole-4-carboxamide) and fumarate, and of adenylosuccinate (ADS or N(6)-(1,2-dicarboxyethyl)-AMP) to adenosine monophosphate (AMP) and fumarate. In Spiroplasma citri, this protein is Adenylosuccinate lyase (purB).